Consider the following 212-residue polypeptide: MRLIIFGPPGAGKGTQAGLLEERHGITQISTGDILREAMAQETELGQKAKSYIDAGELVPDALVRDLAEQAIADEGHDDFMLDGYPRTDQQAEWLTEFLASNETPLDGVLSMKVPDDVLVRRLSRRRVHEETGETYHLDHDPPPEDVDPDLIVQRSDDEPETIQNRLDVYREETAPLATYYEERDLLVPVDGTGGIEEVFGRIEEALDALER.

Position 10 to 15 (10 to 15) interacts with ATP; sequence GAGKGT. Positions 30–59 are NMP; it reads STGDILREAMAQETELGQKAKSYIDAGELV. Residues Thr31, Arg36, 57–59, 84–87, and Gln91 each bind AMP; these read ELV and GYPR. Residues 125–158 are LID; it reads RRRVHEETGETYHLDHDPPPEDVDPDLIVQRSDD. ATP contacts are provided by residues Arg126 and 135 to 136; that span reads TY. The AMP site is built by Arg155 and Arg166. Position 194 (Gly194) interacts with ATP.

Belongs to the adenylate kinase family. As to quaternary structure, monomer.

The protein resides in the cytoplasm. It carries out the reaction AMP + ATP = 2 ADP. It participates in purine metabolism; AMP biosynthesis via salvage pathway; AMP from ADP: step 1/1. Functionally, catalyzes the reversible transfer of the terminal phosphate group between ATP and AMP. Plays an important role in cellular energy homeostasis and in adenine nucleotide metabolism. This Salinibacter ruber (strain DSM 13855 / M31) protein is Adenylate kinase.